A 352-amino-acid chain; its full sequence is Phosphoribosylformylglycinamidine cyclo-ligase (352 aa).

It belongs to the AIR synthase family.

The protein localises to the cytoplasm. It catalyses the reaction 2-formamido-N(1)-(5-O-phospho-beta-D-ribosyl)acetamidine + ATP = 5-amino-1-(5-phospho-beta-D-ribosyl)imidazole + ADP + phosphate + H(+). The protein operates within purine metabolism; IMP biosynthesis via de novo pathway; 5-amino-1-(5-phospho-D-ribosyl)imidazole from N(2)-formyl-N(1)-(5-phospho-D-ribosyl)glycinamide: step 2/2. This Azoarcus sp. (strain BH72) protein is Phosphoribosylformylglycinamidine cyclo-ligase.